The following is a 215-amino-acid chain: ATP-dependent dethiobiotin synthetase BioD (215 aa).

13–18 (DIGKTV) lines the ATP pocket. A Mg(2+)-binding site is contributed by Thr17. Residue Lys38 is part of the active site. Thr42 contacts substrate. ATP-binding positions include Asp50, 115–118 (EGAG), and 175–176 (NH). Asp50 and Glu115 together coordinate Mg(2+).

It belongs to the dethiobiotin synthetase family. In terms of assembly, homodimer. The cofactor is Mg(2+).

The protein resides in the cytoplasm. It catalyses the reaction (7R,8S)-7,8-diammoniononanoate + CO2 + ATP = (4R,5S)-dethiobiotin + ADP + phosphate + 3 H(+). The protein operates within cofactor biosynthesis; biotin biosynthesis; biotin from 7,8-diaminononanoate: step 1/2. In terms of biological role, catalyzes a mechanistically unusual reaction, the ATP-dependent insertion of CO2 between the N7 and N8 nitrogen atoms of 7,8-diaminopelargonic acid (DAPA, also called 7,8-diammoniononanoate) to form a ureido ring. This chain is ATP-dependent dethiobiotin synthetase BioD, found in Neisseria meningitidis serogroup C / serotype 2a (strain ATCC 700532 / DSM 15464 / FAM18).